The sequence spans 415 residues: Queuine tRNA-ribosyltransferase accessory subunit 2 (415 aa).

Residues cysteine 351, cysteine 353, cysteine 356, and histidine 382 each coordinate Zn(2+).

It belongs to the queuine tRNA-ribosyltransferase family. QTRT2 subfamily. Heterodimer of a catalytic subunit QTRT1 and an accessory subunit QTRT2. Zn(2+) is required as a cofactor.

The protein localises to the cytoplasm. The protein resides in the mitochondrion outer membrane. In terms of biological role, non-catalytic subunit of the queuine tRNA-ribosyltransferase (TGT) that catalyzes the base-exchange of a guanine (G) residue with queuine (Q) at position 34 (anticodon wobble position) in tRNAs with GU(N) anticodons (tRNA-Asp, -Asn, -His and -Tyr), resulting in the hypermodified nucleoside queuosine (7-(((4,5-cis-dihydroxy-2-cyclopenten-1-yl)amino)methyl)-7-deazaguanosine). The sequence is that of Queuine tRNA-ribosyltransferase accessory subunit 2 from Homo sapiens (Human).